Consider the following 381-residue polypeptide: Beta-1,4-galactosyltransferase 5 (381 aa).

The Cytoplasmic portion of the chain corresponds to 1–11; that stretch reads MPTHLRFRRRS. The chain crosses the membrane as a helical; Signal-anchor for type II membrane protein span at residues 12–32; it reads FLGLLFLFSLSTSALYFIYSA. Topologically, residues 33-381 are lumenal; sequence PGIVNEYLFM…SRDLAPVADY (349 aa). 3 N-linked (GlcNAc...) asparagine glycosylation sites follow: Asn73, Asn82, and Asn120. A disulfide bond links Cys106 and Cys151. UDP-alpha-D-galactose contacts are provided by residues 162–166, 201–203, 228–229, Tyr257, and Trp289; these read PFRNR, FNR, and VD. A disulfide bridge links Cys222 with Cys241. Position 229 (Asp229) interacts with Mn(2+). 291-294 is a binding site for N-acetyl-D-glucosamine; sequence GEDD. His322 contributes to the Mn(2+) binding site. 322–323 is a binding site for UDP-alpha-D-galactose; the sequence is HH. Position 333 (Arg333) interacts with N-acetyl-D-glucosamine. Residue Asn366 is glycosylated (N-linked (GlcNAc...) asparagine).

This sequence belongs to the glycosyltransferase 7 family. The cofactor is Mn(2+).

The protein resides in the golgi apparatus. The protein localises to the golgi stack membrane. It catalyses the reaction a beta-D-glucosyl-(1&lt;-&gt;1')-N-acylsphing-4-enine + UDP-alpha-D-galactose = a beta-D-Gal-(1-&gt;4)-beta-D-Glc-(1&lt;-&gt;1)-Cer(d18:1(4E)) + UDP + H(+). It participates in protein modification; protein glycosylation. It functions in the pathway sphingolipid metabolism. In terms of biological role, catalyzes the synthesis of lactosylceramide (LacCer) via the transfer of galactose from UDP-galactose to glucosylceramide (GlcCer). Required for proper patterning of the dorsoventral axis during embryogenesis through the regulation of BMP signaling. Plays a role in proteoglycan glycosylation that is required for BMP-dependent specification of the dorsoventral axis. The chain is Beta-1,4-galactosyltransferase 5 (b4galt5) from Danio rerio (Zebrafish).